We begin with the raw amino-acid sequence, 412 residues long: Serine hydroxymethyltransferase (412 aa).

Residues leucine 117 and 121-123 each bind (6S)-5,6,7,8-tetrahydrofolate; that span reads GHL. An N6-(pyridoxal phosphate)lysine modification is found at lysine 226.

This sequence belongs to the SHMT family. As to quaternary structure, homodimer. It depends on pyridoxal 5'-phosphate as a cofactor.

The protein resides in the cytoplasm. It catalyses the reaction (6R)-5,10-methylene-5,6,7,8-tetrahydrofolate + glycine + H2O = (6S)-5,6,7,8-tetrahydrofolate + L-serine. It functions in the pathway one-carbon metabolism; tetrahydrofolate interconversion. The protein operates within amino-acid biosynthesis; glycine biosynthesis; glycine from L-serine: step 1/1. Functionally, catalyzes the reversible interconversion of serine and glycine with tetrahydrofolate (THF) serving as the one-carbon carrier. This reaction serves as the major source of one-carbon groups required for the biosynthesis of purines, thymidylate, methionine, and other important biomolecules. Also exhibits THF-independent aldolase activity toward beta-hydroxyamino acids, producing glycine and aldehydes, via a retro-aldol mechanism. The chain is Serine hydroxymethyltransferase from Staphylococcus aureus (strain MW2).